We begin with the raw amino-acid sequence, 355 residues long: Histidinol-phosphate aminotransferase (355 aa).

The residue at position 222 (Lys-222) is an N6-(pyridoxal phosphate)lysine.

The protein belongs to the class-II pyridoxal-phosphate-dependent aminotransferase family. Histidinol-phosphate aminotransferase subfamily. Pyridoxal 5'-phosphate serves as cofactor.

It carries out the reaction L-histidinol phosphate + 2-oxoglutarate = 3-(imidazol-4-yl)-2-oxopropyl phosphate + L-glutamate. It participates in amino-acid biosynthesis; L-histidine biosynthesis; L-histidine from 5-phospho-alpha-D-ribose 1-diphosphate: step 7/9. This chain is Histidinol-phosphate aminotransferase, found in Natronomonas pharaonis (strain ATCC 35678 / DSM 2160 / CIP 103997 / JCM 8858 / NBRC 14720 / NCIMB 2260 / Gabara) (Halobacterium pharaonis).